Here is a 274-residue protein sequence, read N- to C-terminus: Secreted RxLR effector protein 40 (274 aa).

An N-terminal signal peptide occupies residues 1–21; the sequence is MRLYTQVVAASLVATLAIVDS. Residues 35–53 carry the RxLR-dEER motif; the sequence is RFLRQDNATVARVSEDGER. N-linked (GlcNAc...) asparagine glycans are attached at residues Asn-41, Asn-74, and Asn-258.

It belongs to the RxLR effector family.

Its subcellular location is the secreted. The protein resides in the host nucleus. It localises to the host cytoplasm. Secreted effector that completely suppresses the host cell death induced by cell death-inducing proteins. The chain is Secreted RxLR effector protein 40 from Plasmopara viticola (Downy mildew of grapevine).